The sequence spans 231 residues: ATP phosphoribosyltransferase (231 aa).

This sequence belongs to the ATP phosphoribosyltransferase family. Short subfamily. Heteromultimer composed of HisG and HisZ subunits.

It is found in the cytoplasm. It carries out the reaction 1-(5-phospho-beta-D-ribosyl)-ATP + diphosphate = 5-phospho-alpha-D-ribose 1-diphosphate + ATP. The protein operates within amino-acid biosynthesis; L-histidine biosynthesis; L-histidine from 5-phospho-alpha-D-ribose 1-diphosphate: step 1/9. Functionally, catalyzes the condensation of ATP and 5-phosphoribose 1-diphosphate to form N'-(5'-phosphoribosyl)-ATP (PR-ATP). Has a crucial role in the pathway because the rate of histidine biosynthesis seems to be controlled primarily by regulation of HisG enzymatic activity. This Sinorhizobium fredii (strain NBRC 101917 / NGR234) protein is ATP phosphoribosyltransferase (hisG).